The primary structure comprises 452 residues: Tubulin alpha-6 chain (452 aa).

Gln-11, Glu-69, Ser-138, Gly-142, Thr-143, Thr-177, Asn-204, and Asn-226 together coordinate GTP. Glu-69 provides a ligand contact to Mg(2+). Glu-252 is an active-site residue.

Belongs to the tubulin family. As to quaternary structure, dimer of alpha and beta chains. A typical microtubule is a hollow water-filled tube with an outer diameter of 25 nm and an inner diameter of 15 nM. Alpha-beta heterodimers associate head-to-tail to form protofilaments running lengthwise along the microtubule wall with the beta-tubulin subunit facing the microtubule plus end conferring a structural polarity. Microtubules usually have 13 protofilaments but different protofilament numbers can be found in some organisms and specialized cells. The cofactor is Mg(2+).

Its subcellular location is the cytoplasm. The protein localises to the cytoskeleton. The protein resides in the spindle. The enzyme catalyses GTP + H2O = GDP + phosphate + H(+). Its function is as follows. Tubulin is the major constituent of microtubules, a cylinder consisting of laterally associated linear protofilaments composed of alpha- and beta-tubulin heterodimers. Microtubules grow by the addition of GTP-tubulin dimers to the microtubule end, where a stabilizing cap forms. Below the cap, tubulin dimers are in GDP-bound state, owing to GTPase activity of alpha-tubulin. In Naegleria pringsheimi (Amoeba), this protein is Tubulin alpha-6 chain (TUBA6).